Reading from the N-terminus, the 302-residue chain is UDP-N-acetylenolpyruvoylglucosamine reductase (302 aa).

Residues 31–213 (KIGGPADFLI…KKIREFREKR (183 aa)) enclose the FAD-binding PCMH-type domain. Residue arginine 176 is part of the active site. The active-site Proton donor is the serine 226. The active site involves glutamate 296.

It belongs to the MurB family. FAD is required as a cofactor.

Its subcellular location is the cytoplasm. It carries out the reaction UDP-N-acetyl-alpha-D-muramate + NADP(+) = UDP-N-acetyl-3-O-(1-carboxyvinyl)-alpha-D-glucosamine + NADPH + H(+). Its pathway is cell wall biogenesis; peptidoglycan biosynthesis. Functionally, cell wall formation. This chain is UDP-N-acetylenolpyruvoylglucosamine reductase, found in Carboxydothermus hydrogenoformans (strain ATCC BAA-161 / DSM 6008 / Z-2901).